The following is a 568-amino-acid chain: Urease subunit alpha (568 aa).

One can recognise a Urease domain in the interval 130 to 568 (GGIDTHIHFI…LPMAQRYFLF (439 aa)). H135, H137, and K218 together coordinate Ni(2+). K218 carries the post-translational modification N6-carboxylysine. A substrate-binding site is contributed by H220. Residues H247 and H273 each coordinate Ni(2+). Catalysis depends on H321, which acts as the Proton donor. D361 lines the Ni(2+) pocket.

The protein belongs to the metallo-dependent hydrolases superfamily. Urease alpha subunit family. In terms of assembly, heterotrimer of UreA (gamma), UreB (beta) and UreC (alpha) subunits. Three heterotrimers associate to form the active enzyme. Requires Ni cation as cofactor. Post-translationally, carboxylation allows a single lysine to coordinate two nickel ions.

It is found in the cytoplasm. It catalyses the reaction urea + 2 H2O + H(+) = hydrogencarbonate + 2 NH4(+). The protein operates within nitrogen metabolism; urea degradation; CO(2) and NH(3) from urea (urease route): step 1/1. The chain is Urease subunit alpha from Burkholderia mallei (strain NCTC 10247).